We begin with the raw amino-acid sequence, 718 residues long: Methionine--tRNA ligase (718 aa).

Positions 12–22 (PYANGDIHLGH) match the 'HIGH' region motif. Zn(2+)-binding residues include Cys143, Cys146, Cys156, and Cys159. Positions 349–353 (KMSKS) match the 'KMSKS' region motif. Residue Lys352 participates in ATP binding. The disordered stretch occupies residues 573-599 (AAPAAKVASSQQRHAEKQQHEAQSAET). One can recognise a tRNA-binding domain in the interval 608–718 (DFTKVDLRIA…TGAASGMRVK (111 aa)).

It belongs to the class-I aminoacyl-tRNA synthetase family. MetG type 1 subfamily. Homodimer. It depends on Zn(2+) as a cofactor.

It is found in the cytoplasm. The enzyme catalyses tRNA(Met) + L-methionine + ATP = L-methionyl-tRNA(Met) + AMP + diphosphate. Functionally, is required not only for elongation of protein synthesis but also for the initiation of all mRNA translation through initiator tRNA(fMet) aminoacylation. This is Methionine--tRNA ligase from Aromatoleum aromaticum (strain DSM 19018 / LMG 30748 / EbN1) (Azoarcus sp. (strain EbN1)).